Here is a 440-residue protein sequence, read N- to C-terminus: Tetratricopeptide repeat protein 5 (440 aa).

5 TPR repeats span residues 7–61, 68–98, 103–130, 136–174, and 179–216; these read EEAK…EEVL, AQALMLKGKALNVTPDYSPEAEVLLSKAVKL, VEAWNQLGEVYWKKGDVASAHTCFSGAL, KVSLQNLSMVLRQLQTDSGDEHSRHVMDSVRQAKLAVQM, and GRSWYILGNAYLSLYFNTGQNPKISQQALSAYAQAEKV. The short motif at 13–24 is the Nuclear export signal element; that stretch reads LQKLQGLVDRLY. The residue at position 203 (Ser203) is a Phosphoserine; by ATM. Ser221 is modified (phosphoserine; by CHEK2). The stretch at 224-253 is one TPR 6 repeat; the sequence is PDLHLNRATLHKYEESYGEALEGFSQAAAL. The interval 285 to 287 is mediates interaction with 28S rRNA of ribosome-coding tubulin; the sequence is KPK.

As to quaternary structure, interacts with JMY and p300/EP300; the interaction occurs in the nucleus and augments the association between JMY and p300/EP300 in response to DNA damage. Interacts with PRMT5; the interaction is DNA damage-dependent and promotes PRMT5 interaction with p53/TP53 and subsequent methylation. Forms a complex with HSF1 and p300/EP300; these interactions augment chromatin-bound HSF1 and p300/EP300 histone acetyltransferase activity, resulting in enhanced heat-shock-responsive transcription. Interacts with JMY; the interaction occurs in the cytoplasm and results in the inhibition of JYM's nucleation activity. Interacts with ribosome-coding tubulin (via 60S subunit 28S rRNA and protein uL24/RPL26) and the N-terminal of nascent tubulin polypeptide (via alpha-tubulin MREC motif and beta-tubulin MREI motif); these interactions result in tubulin mRNA-targeted degradation. Interacts with ATP5F1B; the interaction occurs in the mitochondria and results in ATP production decrease. Interacts with p53/TP53; the interaction occurs in the mitochondria and results in increased apoptosis. Post-translationally, phosphorylation by ATM kinase induces nuclear accumulation while interfering with nuclear export, and phosphorylation by CHEK2 kinase enhances nuclear stability. Expressed in heart, brain, spleen, lung, liver, skeletal muscle, kidney and testis.

Its subcellular location is the nucleus. The protein resides in the cytoplasm. The protein localises to the cytoplasmic vesicle. It localises to the mitochondrion matrix. Functionally, cofactor involved in the regulation of various cellular mechanisms such as actin regulation, autophagy, chromatin regulation and DNA repair. In physiological conditions, interacts with cofactor JMY in the cytoplasm which prevents JMY's actin nucleation activity and ability to activate the Arp2/3 complex. Acts as a negative regulator of nutrient stress-induced autophagy by inhibiting JMY's interaction with MAP1LC3B, thereby preventing autophagosome formation. Involves in tubulin autoregulation by promoting its degradation in response to excess soluble tubulin. To do so, associates with the active ribosome near the ribosome exit tunnel and with nascent tubulin polypeptides early during their translation, triggering tubulin mRNA-targeted degradation. Following DNA damage, phosphorylated by DNA damage responsive protein kinases ATM and CHEK2, leading to its nuclear accumulation and stability. Nuclear TTC5/STRAP promotes the assembly of a stress-responsive p53/TP53 coactivator complex, which includes the coactivators JMY and p300, thereby increasing p53/TP53-dependent transcription and apoptosis. Also recruits arginine methyltransferase PRMT5 to p53/TP53 when DNA is damaged, allowing PRMT5 to methylate p53/TP53. In DNA stress conditions, also prevents p53/TP53 degradation by E3 ubiquitin ligase MDM2. Upon heat-shock stress, forms a chromatin-associated complex with heat-shock factor 1 HSF1 and p300/EP300 to stimulate heat-shock-responsive transcription, thereby increasing cell survival. Mitochondrial TTC5/STRAP interacts with ATP synthase subunit beta ATP5F1B which decreased ATP synthase activity and lowers mitochondrial ATP production, thereby regulating cellular respiration and mitochondrial-dependent apoptosis. Mitochondrial TTC5/STRAP also regulates p53/TP53-mediated apoptosis. In Mus musculus (Mouse), this protein is Tetratricopeptide repeat protein 5.